The chain runs to 445 residues: N-succinylarginine dihydrolase (445 aa).

Residues 19-28 (AGLSFGNVAS), Asn110, and 137-138 (HR) contribute to the substrate site. The active site involves Glu174. Arg214 is a binding site for substrate. Residue His250 is part of the active site. The substrate site is built by Asp252 and Asn363. The Nucleophile role is filled by Cys369.

This sequence belongs to the succinylarginine dihydrolase family. In terms of assembly, homodimer.

The catalysed reaction is N(2)-succinyl-L-arginine + 2 H2O + 2 H(+) = N(2)-succinyl-L-ornithine + 2 NH4(+) + CO2. It functions in the pathway amino-acid degradation; L-arginine degradation via AST pathway; L-glutamate and succinate from L-arginine: step 2/5. Catalyzes the hydrolysis of N(2)-succinylarginine into N(2)-succinylornithine, ammonia and CO(2). The protein is N-succinylarginine dihydrolase of Shewanella sediminis (strain HAW-EB3).